Reading from the N-terminus, the 256-residue chain is 1-(5-phosphoribosyl)-5-[(5-phosphoribosylamino)methylideneamino] imidazole-4-carboxamide isomerase (256 aa).

Residue D8 is the Proton acceptor of the active site. D130 serves as the catalytic Proton donor.

The protein belongs to the HisA/HisF family.

It is found in the cytoplasm. It catalyses the reaction 1-(5-phospho-beta-D-ribosyl)-5-[(5-phospho-beta-D-ribosylamino)methylideneamino]imidazole-4-carboxamide = 5-[(5-phospho-1-deoxy-D-ribulos-1-ylimino)methylamino]-1-(5-phospho-beta-D-ribosyl)imidazole-4-carboxamide. It functions in the pathway amino-acid biosynthesis; L-histidine biosynthesis; L-histidine from 5-phospho-alpha-D-ribose 1-diphosphate: step 4/9. The chain is 1-(5-phosphoribosyl)-5-[(5-phosphoribosylamino)methylideneamino] imidazole-4-carboxamide isomerase from Chlorobium phaeovibrioides (strain DSM 265 / 1930) (Prosthecochloris vibrioformis (strain DSM 265)).